A 437-amino-acid polypeptide reads, in one-letter code: tRNA-2-methylthio-N(6)-dimethylallyladenosine synthase (437 aa).

In terms of domain architecture, MTTase N-terminal spans 1–115; sequence MKVYIETMGC…ISQVIHKEKA (115 aa). [4Fe-4S] cluster contacts are provided by cysteine 10, cysteine 46, cysteine 78, cysteine 148, cysteine 152, and cysteine 155. Positions 134–367 constitute a Radical SAM core domain; that stretch reads KKAQIRSLLN…QNRHKEILEE (234 aa). In terms of domain architecture, TRAM spans 370–436; sequence KLEVGKTHVV…KGRLIAAIKG (67 aa).

This sequence belongs to the methylthiotransferase family. MiaB subfamily. As to quaternary structure, monomer. [4Fe-4S] cluster is required as a cofactor.

It localises to the cytoplasm. The catalysed reaction is N(6)-dimethylallyladenosine(37) in tRNA + (sulfur carrier)-SH + AH2 + 2 S-adenosyl-L-methionine = 2-methylsulfanyl-N(6)-dimethylallyladenosine(37) in tRNA + (sulfur carrier)-H + 5'-deoxyadenosine + L-methionine + A + S-adenosyl-L-homocysteine + 2 H(+). Its function is as follows. Catalyzes the methylthiolation of N6-(dimethylallyl)adenosine (i(6)A), leading to the formation of 2-methylthio-N6-(dimethylallyl)adenosine (ms(2)i(6)A) at position 37 in tRNAs that read codons beginning with uridine. This chain is tRNA-2-methylthio-N(6)-dimethylallyladenosine synthase, found in Helicobacter pylori (strain P12).